Reading from the N-terminus, the 360-residue chain is Alpha-ketoglutarate dependent kainoid synthase (360 aa).

The 111-residue stretch at 200–310 folds into the Fe2OG dioxygenase domain; it reads MFFSNRIYPE…RASLISFYEP (111 aa). 3 residues coordinate Fe cation: H225, D227, and H286. R301 provides a ligand contact to 2-oxoglutarate.

It belongs to the iron/ascorbate-dependent oxidoreductase family. Fe(2+) is required as a cofactor.

It catalyses the reaction prekainate + 2-oxoglutarate + O2 = kainate + succinate + CO2 + H2O. The catalysed reaction is prekainate + 2-oxoglutarate + O2 + H(+) = kainate lactone + succinate + CO2 + H2O. The protein operates within secondary metabolite biosynthesis. Its activity is regulated as follows. Inhibited by the iron chelator EDTA. In terms of biological role, iron/ascorbate-dependent oxidoreductase: part of the gene cluster that mediates the biosynthesis of kainic acid (KA) and derivatives, natural products with neurochemical activity acting as ionotropic glutamate receptor (iGluR) agonists, thus being neurotoxins. Catalyzes the conversion of prekainic acid to kainic acid and kainic acid lactone. This is Alpha-ketoglutarate dependent kainoid synthase from Digenea simplex (Marine red alga).